We begin with the raw amino-acid sequence, 113 residues long: Integration host factor subunit alpha (113 aa).

Disordered regions lie at residues 59–80 (GNFQ…GETI) and 94–113 (QKLK…ASAE). Residues 104-113 (NSPPDPASAE) show a composition bias toward pro residues.

Belongs to the bacterial histone-like protein family. Heterodimer of an alpha and a beta chain.

In terms of biological role, this protein is one of the two subunits of integration host factor, a specific DNA-binding protein that functions in genetic recombination as well as in transcriptional and translational control. The polypeptide is Integration host factor subunit alpha (Bordetella pertussis (strain Tohama I / ATCC BAA-589 / NCTC 13251)).